Here is a 310-residue protein sequence, read N- to C-terminus: MIIVTGGAGFIGSNIVKALNDKGITDILVVDNLKEGTKFVNLVDLNIADYMDKEDFLIQIMSGEELGDIEAVFHEGACSSTTEWDGKYMMDNNYQYSKELLHYCLEREIPFLYASSAATYGGRTSDFIESREYEKPLNVYGYSKFLFDEYVRQILPEANSQIVGFRYFNVYGPREGHKGSMASVAFHLNTQLNNGESPKLFEGSENFKRDFVYVGDVADVNLWFLESGKSGIFNLGTGRAESFQAVADATLAYHKKGSIEYIPFPDKLKGRYQAFTQADLTNLRNAGYDKPFKTVAEGVTEYMAWLNRDA.

NADP(+)-binding positions include 10 to 11 (FI), 31 to 32 (DN), lysine 38, lysine 53, 75 to 79 (EGACS), and asparagine 92. Tyrosine 140 (proton acceptor) is an active-site residue. Lysine 144 serves as a coordination point for NADP(+). Position 169 (asparagine 169) interacts with substrate. Residues valine 170 and lysine 178 each coordinate NADP(+). The active-site Proton acceptor is lysine 178. Substrate-binding positions include serine 180, histidine 187, 201–204 (FEGS), arginine 209, and tyrosine 272.

It belongs to the NAD(P)-dependent epimerase/dehydratase family. HldD subfamily. As to quaternary structure, homopentamer. Requires NADP(+) as cofactor.

The catalysed reaction is ADP-D-glycero-beta-D-manno-heptose = ADP-L-glycero-beta-D-manno-heptose. Its pathway is nucleotide-sugar biosynthesis; ADP-L-glycero-beta-D-manno-heptose biosynthesis; ADP-L-glycero-beta-D-manno-heptose from D-glycero-beta-D-manno-heptose 7-phosphate: step 4/4. Catalyzes the interconversion between ADP-D-glycero-beta-D-manno-heptose and ADP-L-glycero-beta-D-manno-heptose via an epimerization at carbon 6 of the heptose. The chain is ADP-L-glycero-D-manno-heptose-6-epimerase from Salmonella arizonae (strain ATCC BAA-731 / CDC346-86 / RSK2980).